The sequence spans 201 residues: NADH-quinone oxidoreductase subunit C 1 (201 aa).

Belongs to the complex I 30 kDa subunit family. NDH-1 is composed of 14 different subunits. Subunits NuoB, C, D, E, F, and G constitute the peripheral sector of the complex.

It is found in the cell inner membrane. The catalysed reaction is a quinone + NADH + 5 H(+)(in) = a quinol + NAD(+) + 4 H(+)(out). Functionally, NDH-1 shuttles electrons from NADH, via FMN and iron-sulfur (Fe-S) centers, to quinones in the respiratory chain. The immediate electron acceptor for the enzyme in this species is believed to be ubiquinone. Couples the redox reaction to proton translocation (for every two electrons transferred, four hydrogen ions are translocated across the cytoplasmic membrane), and thus conserves the redox energy in a proton gradient. The sequence is that of NADH-quinone oxidoreductase subunit C 1 from Rhizobium meliloti (strain 1021) (Ensifer meliloti).